A 167-amino-acid polypeptide reads, in one-letter code: Thioredoxin-like protein HI_1115 (167 aa).

A helical transmembrane segment spans residues 10-27 (GLSLFLTFIVITSILDFV). One can recognise a Thioredoxin domain in the interval 30–167 (PVVPEEINKI…VRLFFAEFFG (138 aa)). A disulfide bridge connects residues cysteine 69 and cysteine 72.

The protein belongs to the thioredoxin family.

It localises to the cell membrane. This Haemophilus influenzae (strain ATCC 51907 / DSM 11121 / KW20 / Rd) protein is Thioredoxin-like protein HI_1115.